Here is a 161-residue protein sequence, read N- to C-terminus: Protein-export protein SecB (161 aa).

Belongs to the SecB family. As to quaternary structure, homotetramer, a dimer of dimers. One homotetramer interacts with 1 SecA dimer.

It localises to the cytoplasm. Functionally, one of the proteins required for the normal export of preproteins out of the cell cytoplasm. It is a molecular chaperone that binds to a subset of precursor proteins, maintaining them in a translocation-competent state. It also specifically binds to its receptor SecA. This chain is Protein-export protein SecB, found in Shewanella sp. (strain ANA-3).